A 104-amino-acid polypeptide reads, in one-letter code: MQPNDITFFQRFQNDILAGRKTITIRDASESHFKAGDVLRVGRFEDDGYFCTIEVTGTSTVTLDTLNEKHAQQENMSLDELKRVIAEIYPNQTQFYVIDFKCLR.

Residues 6 to 94 form the ASCH domain; the sequence is ITFFQRFQND…IAEIYPNQTQ (89 aa). K21 (proton acceptor) is an active-site residue. T24 (nucleophile) is an active-site residue. E74 functions as the Proton donor in the catalytic mechanism.

It belongs to the N(4)-acetylcytidine amidohydrolase family.

It catalyses the reaction N(4)-acetylcytidine + H2O = cytidine + acetate + H(+). The catalysed reaction is N(4)-acetyl-2'-deoxycytidine + H2O = 2'-deoxycytidine + acetate + H(+). It carries out the reaction N(4)-acetylcytosine + H2O = cytosine + acetate + H(+). Catalyzes the hydrolysis of N(4)-acetylcytidine (ac4C). The sequence is that of N(4)-acetylcytidine amidohydrolase (yqfB) from Salmonella agona (strain SL483).